A 101-amino-acid chain; its full sequence is Small ribosomal subunit protein uS14 (101 aa).

The protein belongs to the universal ribosomal protein uS14 family. Part of the 30S ribosomal subunit. Contacts proteins S3 and S10.

Its function is as follows. Binds 16S rRNA, required for the assembly of 30S particles and may also be responsible for determining the conformation of the 16S rRNA at the A site. The polypeptide is Small ribosomal subunit protein uS14 (Serratia proteamaculans (strain 568)).